The chain runs to 207 residues: MSLGLLGNKIGMTQIFDESGNIIPVTILKVGPCVITQVKTDLNDGYNAIQIGYGTVSNKSLTQPELGHLQKSNIQPLKYLKEFRVNNPEEFKVGQVVNVESLSTGQFIDVTGKSSGKGFSGLQKRHNFTRGPMTHGSKNHRAPGSIGMGTTPGRVLPGKKMAGQLGNKVTKTKKLKIIQVNGNENILVVKGSVPGKPGNLVTIHVSN.

The disordered stretch occupies residues 128-148 (FTRGPMTHGSKNHRAPGSIGM).

This sequence belongs to the universal ribosomal protein uL3 family. Part of the 50S ribosomal subunit.

Its subcellular location is the plastid. The protein resides in the chloroplast. Functionally, one of the primary rRNA binding proteins, it binds directly near the 3'-end of the 23S rRNA, where it nucleates assembly of the 50S subunit. This is Large ribosomal subunit protein uL3c (rpl3) from Trieres chinensis (Marine centric diatom).